The sequence spans 76 residues: Exodeoxyribonuclease 7 small subunit (76 aa).

Belongs to the XseB family. In terms of assembly, heterooligomer composed of large and small subunits.

The protein resides in the cytoplasm. The enzyme catalyses Exonucleolytic cleavage in either 5'- to 3'- or 3'- to 5'-direction to yield nucleoside 5'-phosphates.. Bidirectionally degrades single-stranded DNA into large acid-insoluble oligonucleotides, which are then degraded further into small acid-soluble oligonucleotides. This chain is Exodeoxyribonuclease 7 small subunit, found in Legionella pneumophila subsp. pneumophila (strain Philadelphia 1 / ATCC 33152 / DSM 7513).